A 505-amino-acid chain; its full sequence is Chemotaxis regulatory protein ChePep (505 aa).

2 disordered regions span residues 154-403 (EPNN…EDIP) and 420-465 (EAVA…SSPL). Composition is skewed to basic and acidic residues over residues 172–263 (EEVK…EKTQ), 289–311 (ENKE…EVVT), 337–346 (QAHELEKQEI), 359–373 (QDKE…KEET), and 386–398 (PQEK…HYES). Residues 440–451 (TETSKNENNTET) show a composition bias toward low complexity.

In terms of assembly, interacts with CheZ; the interaction is essential for each other polar localization.

It localises to the cytoplasm. Its function is as follows. Plays an essential role in chemotaxis. Regulates flagellar rotation through the formation of a complex with chemotaxis protein CheZ. Plays a major role in colonization of the stomach. The chain is Chemotaxis regulatory protein ChePep from Helicobacter pylori (strain ATCC 700392 / 26695) (Campylobacter pylori).